A 173-amino-acid chain; its full sequence is dCTP deaminase, dUMP-forming (173 aa).

DCTP contacts are provided by residues 93 to 98, D111, 119 to 121, Q138, and Y151; these read RSSTGR and TLE. Catalysis depends on E121, which acts as the Proton donor/acceptor.

Belongs to the dCTP deaminase family. As to quaternary structure, homotrimer.

The enzyme catalyses dCTP + 2 H2O = dUMP + NH4(+) + diphosphate. Its pathway is pyrimidine metabolism; dUMP biosynthesis; dUMP from dCTP: step 1/1. Its function is as follows. Bifunctional enzyme that catalyzes both the deamination of dCTP to dUTP and the hydrolysis of dUTP to dUMP without releasing the toxic dUTP intermediate. In Clostridium botulinum (strain Alaska E43 / Type E3), this protein is dCTP deaminase, dUMP-forming.